A 704-amino-acid polypeptide reads, in one-letter code: SH3KBP1-binding protein 1 (704 aa).

A2 carries the post-translational modification N-acetylalanine. A BTB domain is found at 19 to 88; that stretch reads EVIHLNVGGK…LRTKELDPRG (70 aa). Positions 146-165 are disordered; the sequence is VGPQQIGGRPAPVRRSNTMP. A Phosphothreonine modification is found at T163. WD repeat units lie at residues 233-280, 283-322, 324-359, 428-466, and 548-586; these read RLDW…GGSE, VFHLGVPVEALFFVGNQLIATSHTGRIGVWNAVTKHWQVQ, VQPITSYDAAGSFLLLGCSNGSIYYVDVQKFPLRMK, VHRSPVTKIMLSEKHLISVCADNNHVRTWSVTRFRGMIS, and LECEGSRRLGSRPRRYLLTGQANGSLAMWDLTTAMDGLG. The interval 609–704 is disordered; the sequence is PLTSSRASFP…PKNTLNETSF (96 aa). Positions 611-631 are enriched in low complexity; it reads TSSRASFPSPSPRTSLTSLHS. The short motif at 618 to 623 is the PXXXPR element; that stretch reads PSPSPR. Phosphoserine is present on residues S644 and S646. Residues 678–683 carry the PXXXPR motif; it reads PTPAPR.

Belongs to the KCTD3 family. In terms of assembly, monomer. Interacts with CUL3; interaction is direct and forms a 5:5 heterodecamer. Interacts (via PXXXPR motifs) with SH3KBP1 (via SH3 domains). Directly interacts with cathepsin B/CTSB.

The protein resides in the lysosome. Its function is as follows. Inhibits CBL-SH3KBP1 complex mediated down-regulation of EGFR signaling by sequestration of SH3KBP1. Binds to SH3KBP1 and prevents its interaction with CBL and inhibits translocation of SH3KBP1 to EGFR containing vesicles upon EGF stimulation. This is SH3KBP1-binding protein 1 (Shkbp1) from Rattus norvegicus (Rat).